The primary structure comprises 147 residues: Large ribosomal subunit protein uL13 (147 aa).

It belongs to the universal ribosomal protein uL13 family. As to quaternary structure, part of the 50S ribosomal subunit.

Its function is as follows. This protein is one of the early assembly proteins of the 50S ribosomal subunit, although it is not seen to bind rRNA by itself. It is important during the early stages of 50S assembly. The sequence is that of Large ribosomal subunit protein uL13 from Kineococcus radiotolerans (strain ATCC BAA-149 / DSM 14245 / SRS30216).